We begin with the raw amino-acid sequence, 565 residues long: Sulfite reductase [NADPH] hemoprotein beta-component (565 aa).

4 residues coordinate [4Fe-4S] cluster: C429, C435, C474, and C478. C478 contributes to the siroheme binding site.

The protein belongs to the nitrite and sulfite reductase 4Fe-4S domain family. Alpha(8)-beta(8). The alpha component is a flavoprotein, the beta component is a hemoprotein. Siroheme is required as a cofactor. It depends on [4Fe-4S] cluster as a cofactor.

It catalyses the reaction hydrogen sulfide + 3 NADP(+) + 3 H2O = sulfite + 3 NADPH + 4 H(+). It participates in sulfur metabolism; hydrogen sulfide biosynthesis; hydrogen sulfide from sulfite (NADPH route): step 1/1. Component of the sulfite reductase complex that catalyzes the 6-electron reduction of sulfite to sulfide. This is one of several activities required for the biosynthesis of L-cysteine from sulfate. This is Sulfite reductase [NADPH] hemoprotein beta-component from Shewanella putrefaciens (strain CN-32 / ATCC BAA-453).